A 473-amino-acid chain; its full sequence is Photosystem II CP43 reaction center protein (473 aa).

A propeptide spanning residues 1 to 14 (MKNLYSLRRFYHVE) is cleaved from the precursor. Thr15 is modified (N-acetylthreonine). Thr15 carries the post-translational modification Phosphothreonine. Helical transmembrane passes span 69–93 (LFEV…PHLA), 134–155 (LIGP…KDKN), 178–200 (KARY…RVIT), 255–275 (KPFG…LSYS), and 291–312 (WFNN…ASQA). Position 367 (Glu367) interacts with [CaMn4O5] cluster. A helical transmembrane segment spans residues 447–471 (RARAAAAGFEKGIDRDTEPTLFMRP).

The protein belongs to the PsbB/PsbC family. PsbC subfamily. PSII is composed of 1 copy each of membrane proteins PsbA, PsbB, PsbC, PsbD, PsbE, PsbF, PsbH, PsbI, PsbJ, PsbK, PsbL, PsbM, PsbT, PsbX, PsbY, PsbZ, Psb30/Ycf12, at least 3 peripheral proteins of the oxygen-evolving complex and a large number of cofactors. It forms dimeric complexes. It depends on Binds multiple chlorophylls and provides some of the ligands for the Ca-4Mn-5O cluster of the oxygen-evolving complex. It may also provide a ligand for a Cl- that is required for oxygen evolution. PSII binds additional chlorophylls, carotenoids and specific lipids. as a cofactor.

It localises to the plastid. The protein localises to the chloroplast thylakoid membrane. In terms of biological role, one of the components of the core complex of photosystem II (PSII). It binds chlorophyll and helps catalyze the primary light-induced photochemical processes of PSII. PSII is a light-driven water:plastoquinone oxidoreductase, using light energy to abstract electrons from H(2)O, generating O(2) and a proton gradient subsequently used for ATP formation. This chain is Photosystem II CP43 reaction center protein, found in Nephroselmis olivacea (Green alga).